Reading from the N-terminus, the 415-residue chain is Ribulose bisphosphate carboxylase/oxygenase activase (415 aa).

Glycine 37–threonine 44 is an ATP binding site.

It belongs to the RuBisCO activase family.

Its function is as follows. Activation of RuBisCO (ribulose-1,5-bisohosphate carboxylase/oxygenase; EC 4.1.1.39) involves the ATP-dependent carboxylation of the epsilon-amino group of lysine leading to a carbamate structure. The sequence is that of Ribulose bisphosphate carboxylase/oxygenase activase (rca) from Anabaena sp. (strain CA / ATCC 33047).